We begin with the raw amino-acid sequence, 214 residues long: Putative F-box protein At3g58910 (214 aa).

The 47-residue stretch at 1 to 47 (MDRVSSLPDELLCHILSFLTTKETALTSLLSKREIIPLIKSVVFPTL) folds into the F-box domain.

In Arabidopsis thaliana (Mouse-ear cress), this protein is Putative F-box protein At3g58910.